Reading from the N-terminus, the 735-residue chain is Ribosomal RNA large subunit methyltransferase K/L (735 aa).

A THUMP domain is found at 45-156 (DGYRACLWSR…RDSLSFSLDL (112 aa)).

Belongs to the methyltransferase superfamily. RlmKL family.

The protein localises to the cytoplasm. It carries out the reaction guanosine(2445) in 23S rRNA + S-adenosyl-L-methionine = N(2)-methylguanosine(2445) in 23S rRNA + S-adenosyl-L-homocysteine + H(+). The catalysed reaction is guanosine(2069) in 23S rRNA + S-adenosyl-L-methionine = N(2)-methylguanosine(2069) in 23S rRNA + S-adenosyl-L-homocysteine + H(+). In terms of biological role, specifically methylates the guanine in position 2445 (m2G2445) and the guanine in position 2069 (m7G2069) of 23S rRNA. The sequence is that of Ribosomal RNA large subunit methyltransferase K/L from Allochromatium vinosum (strain ATCC 17899 / DSM 180 / NBRC 103801 / NCIMB 10441 / D) (Chromatium vinosum).